The primary structure comprises 760 residues: Exostosin-1 (760 aa).

Residues 1 to 6 are Cytoplasmic-facing; the sequence is MQAKKR. Residues 7-25 traverse the membrane as a helical; Signal-anchor for type II membrane protein segment; the sequence is YILVFVSCAFLAYAYFGGY. Topologically, residues 26-760 are lumenal; it reads RLKVSPLRPR…KYRQIELVGS (735 aa). Residues Asn-71 and Asn-327 are each glycosylated (N-linked (GlcNAc...) asparagine). Position 437 (Arg-437) interacts with UDP-N-acetyl-alpha-D-glucosamine. Asn-476 carries an N-linked (GlcNAc...) asparagine glycan. Residues 540–560 are disordered; sequence LGGSTRSQGAGPTSQTTEGRP. Over residues 541–560 the composition is skewed to polar residues; that stretch reads GGSTRSQGAGPTSQTTEGRP. UDP-N-acetyl-alpha-D-glucosamine contacts are provided by Arg-565, Asp-581, Glu-582, Asp-583, Glu-669, Asp-670, and Arg-713. Asp-583 contacts Mn(2+). Residues Cys-668 and Cys-716 are joined by a disulfide bond. Asp-670 is an active-site residue.

The protein belongs to the glycosyltransferase 47 family. In terms of assembly, interacts with sau. The cofactor is Mn(2+). In terms of tissue distribution, ubiquitously expressed in early embryos. Later (in stage 10 embryos), it is expressed at higher level in the nervous system. Ubiquitously expressed in wing imaginal disk.

The protein localises to the endoplasmic reticulum membrane. Its subcellular location is the golgi apparatus membrane. It carries out the reaction 3-O-{[(1-&gt;4)-beta-D-GlcA-(1-&gt;4)-alpha-D-GlcNAc](n)-(1-&gt;4)-beta-D-GlcA-(1-&gt;3)-beta-D-Gal-(1-&gt;3)-beta-D-Gal-(1-&gt;4)-beta-D-Xyl}-L-seryl-[protein] + UDP-N-acetyl-alpha-D-glucosamine = 3-O-{alpha-D-GlcNAc-[(1-&gt;4)-beta-D-GlcA-(1-&gt;4)-alpha-D-GlcNAc](n)-(1-&gt;4)-beta-D-GlcA-(1-&gt;3)-beta-D-Gal-(1-&gt;3)-beta-D-Gal-(1-&gt;4)-beta-D-Xyl}-L-seryl-[protein] + UDP + H(+). It catalyses the reaction 3-O-{alpha-D-GlcNAc-[(1-&gt;4)-beta-D-GlcA-(1-&gt;4)-alpha-D-GlcNAc](n)-(1-&gt;4)-beta-D-GlcA-(1-&gt;3)-beta-D-Gal-(1-&gt;3)-beta-D-Gal-(1-&gt;4)-beta-D-Xyl}-L-seryl-[protein] + UDP-alpha-D-glucuronate = 3-O-{[(1-&gt;4)-beta-D-GlcA-(1-&gt;4)-alpha-D-GlcNAc](n+1)-(1-&gt;4)-beta-D-GlcA-(1-&gt;3)-beta-D-Gal-(1-&gt;3)-beta-D-Gal-(1-&gt;4)-beta-D-Xyl}-L-seryl-[protein] + UDP + H(+). Its pathway is protein modification; protein glycosylation. The protein operates within glycan metabolism; heparan sulfate biosynthesis. It functions in the pathway glycan metabolism; heparin biosynthesis. In terms of biological role, glycosyltransferase required for the biosynthesis of heparan-sulfate and responsible for the alternating addition of beta-1-4-linked glucuronic acid (GlcA) and alpha-1-4-linked N-acetylglucosamine (GlcNAc) units to nascent heparan sulfate chains. Botv is the trigger of heparan sulfate chain initiation and polymerization takes place by a complex of ttv and sotv. Plays a central role in the diffusion of morphogens hedgehog (hh), wingless (wg) and decapentaplegic (dpp) via its role in heparan sulfate proteoglycans (HSPGs) biosynthesis which are required for movement of hh, dpp and wg morphogens. The protein is Exostosin-1 (ttv) of Drosophila melanogaster (Fruit fly).